The primary structure comprises 82 residues: Small ribosomal subunit protein bS16 (82 aa).

The protein belongs to the bacterial ribosomal protein bS16 family.

The polypeptide is Small ribosomal subunit protein bS16 (Synechocystis sp. (strain ATCC 27184 / PCC 6803 / Kazusa)).